The chain runs to 464 residues: 3-isopropylmalate dehydratase large subunit (464 aa).

Residues cysteine 337, cysteine 397, and cysteine 400 each coordinate [4Fe-4S] cluster.

This sequence belongs to the aconitase/IPM isomerase family. LeuC type 1 subfamily. As to quaternary structure, heterodimer of LeuC and LeuD. [4Fe-4S] cluster serves as cofactor.

The catalysed reaction is (2R,3S)-3-isopropylmalate = (2S)-2-isopropylmalate. It participates in amino-acid biosynthesis; L-leucine biosynthesis; L-leucine from 3-methyl-2-oxobutanoate: step 2/4. In terms of biological role, catalyzes the isomerization between 2-isopropylmalate and 3-isopropylmalate, via the formation of 2-isopropylmaleate. This Bacillus cereus (strain ATCC 14579 / DSM 31 / CCUG 7414 / JCM 2152 / NBRC 15305 / NCIMB 9373 / NCTC 2599 / NRRL B-3711) protein is 3-isopropylmalate dehydratase large subunit.